We begin with the raw amino-acid sequence, 367 residues long: Palmitoyltransferase ZDHHC2 (367 aa).

Residues 1–16 (MAPSGPGSSARRRCRR) are Cytoplasmic-facing. Residues 17–37 (VLYWIPVVFITLLLGWSYYAY) form a helical membrane-spanning segment. At 38–54 (AIQLCIVSMENTGEQVV) the chain is on the lumenal side. The helical transmembrane segment at 55 to 75 (CLMAYHLLFAMFVWSYWKTIF) threads the bilayer. Topologically, residues 76–170 (TLPMNPSKEF…NNCVGFSNYK (95 aa)) are cytoplasmic. The DHHC domain maps to 127 to 177 (RYCDRCQLIKPDRCHHCSVCDKCILKMDHHCPWVNNCVGFSNYKFFLLFLA). The active-site S-palmitoyl cysteine intermediate is the Cys157. A helical transmembrane segment spans residues 171 to 191 (FFLLFLAYSLLYCLFIAATDL). The Lumenal segment spans residues 192-208 (QYFIKFWTNGLPDTQAK). Residues 209 to 229 (FHIMFLFFAAAMFSVSLSSLF) traverse the membrane as a helical segment. The Cytoplasmic segment spans residues 230–367 (GYHCWLVSKN…NPALTMENET (138 aa)). The tract at residues 299-367 (NQDPEQASTP…NPALTMENET (69 aa)) is mediates localization to plasma membrane and recycling endosomes. The segment at 330–367 (ESQSHLLTDSQSWTESSINPGKCKAGMSNPALTMENET) is disordered. Residues 333–348 (SHLLTDSQSWTESSIN) show a composition bias toward polar residues. The Non-canonical dileucine endocytic signal signature appears at 335–336 (LL). A Phosphoserine modification is found at Ser341. Residues 358–361 (NPAL) carry the NPxY-like endocytic signal motif.

The protein belongs to the DHHC palmitoyltransferase family. Monomer. Homodimer. The monomeric form has a higher catalytic activity. In terms of processing, autopalmitoylated. As to expression, ubiquitously expressed. Reduced expression in colorectal cancers with liver metastasis.

It is found in the postsynaptic density. It localises to the postsynaptic recycling endosome membrane. The protein resides in the cell membrane. Its subcellular location is the endoplasmic reticulum membrane. The protein localises to the golgi apparatus membrane. It catalyses the reaction L-cysteinyl-[protein] + hexadecanoyl-CoA = S-hexadecanoyl-L-cysteinyl-[protein] + CoA. The catalysed reaction is L-cysteinyl-[protein] + tetradecanoyl-CoA = S-tetradecanoyl-L-cysteinyl-[protein] + CoA. It carries out the reaction L-cysteinyl-[protein] + octadecanoyl-CoA = S-octadecanoyl-L-cysteinyl-[protein] + CoA. In terms of biological role, palmitoyltransferase that catalyzes the addition of palmitate onto various protein substrates and is involved in a variety of cellular processes. Has no stringent fatty acid selectivity and in addition to palmitate can also transfer onto target proteins myristate from tetradecanoyl-CoA and stearate from octadecanoyl-CoA. In the nervous system, plays a role in long term synaptic potentiation by palmitoylating AKAP5 through which it regulates protein trafficking from the dendritic recycling endosomes to the plasma membrane and controls both structural and functional plasticity at excitatory synapses. In dendrites, mediates the palmitoylation of DLG4 when synaptic activity decreases and induces synaptic clustering of DLG4 and associated AMPA-type glutamate receptors. Also mediates the de novo and turnover palmitoylation of RGS7BP, a shuttle for Gi/o-specific GTPase-activating proteins/GAPs, promoting its localization to the plasma membrane in response to the activation of G protein-coupled receptors. Through the localization of these GTPase-activating proteins/GAPs, it also probably plays a role in G protein-coupled receptors signaling in neurons. Also probably plays a role in cell adhesion by palmitoylating CD9 and CD151 to regulate their expression and function. Palmitoylates the endoplasmic reticulum protein CKAP4 and regulates its localization to the plasma membrane. Could also palmitoylate LCK and regulate its localization to the plasma membrane. Functionally, (Microbial infection) Promotes Chikungunya virus (CHIKV) replication by mediating viral nsp1 palmitoylation. The polypeptide is Palmitoyltransferase ZDHHC2 (Homo sapiens (Human)).